Reading from the N-terminus, the 459-residue chain is 2-(3-amino-3-carboxypropyl)histidine synthase subunit 1 (459 aa).

The disordered stretch occupies residues 1 to 68 (MEDDRAQVDL…AGANTSIEDS (68 aa)). A compositionally biased stretch (low complexity) spans 41-61 (SAAAGKSSSSSSNSTSQPAGA). [4Fe-4S] cluster contacts are provided by Cys165, Cys268, and Cys403.

Belongs to the DPH1/DPH2 family. DPH1 subfamily. Component of the 2-(3-amino-3-carboxypropyl)histidine synthase complex composed of dph-1, dph-2, dph-3 and a NADH-dependent reductase, predominantly cbr-1. It depends on [4Fe-4S] cluster as a cofactor.

The protein resides in the cytoplasm. It carries out the reaction L-histidyl-[translation elongation factor 2] + S-adenosyl-L-methionine = 2-[(3S)-amino-3-carboxypropyl]-L-histidyl-[translation elongation factor 2] + S-methyl-5'-thioadenosine + H(+). It functions in the pathway protein modification; peptidyl-diphthamide biosynthesis. Functionally, catalyzes the first step of diphthamide biosynthesis, a post-translational modification of histidine which occurs in elongation factor 2. Dph-1 and dph-2 transfer a 3-amino-3-carboxypropyl (ACP) group from S-adenosyl-L-methionine (SAM) to a histidine residue, the reaction is assisted by a reduction system comprising dph-3 and a NADH-dependent reductase, predominantly cbr-1. The polypeptide is 2-(3-amino-3-carboxypropyl)histidine synthase subunit 1 (dph-1) (Neurospora crassa (strain ATCC 24698 / 74-OR23-1A / CBS 708.71 / DSM 1257 / FGSC 987)).